A 653-amino-acid polypeptide reads, in one-letter code: Biotin biosynthesis bifunctional protein BioWF (653 aa).

A substrate-binding site is contributed by Arg278. 365 to 366 (GY) serves as a coordination point for pyridoxal 5'-phosphate. His390 is a substrate binding site. Pyridoxal 5'-phosphate is bound by residues Ser436, 461–464 (DDAH), and 492–495 (TASK). Residue Lys495 is modified to N6-(pyridoxal phosphate)lysine.

This sequence in the N-terminal section; belongs to the BioW family. In the C-terminal section; belongs to the class-II pyridoxal-phosphate-dependent aminotransferase family. BioF subfamily. Homodimer. Mg(2+) is required as a cofactor. Requires pyridoxal 5'-phosphate as cofactor.

It carries out the reaction heptanedioate + ATP + CoA = 6-carboxyhexanoyl-CoA + AMP + diphosphate. The enzyme catalyses 6-carboxyhexanoyl-[ACP] + L-alanine + H(+) = (8S)-8-amino-7-oxononanoate + holo-[ACP] + CO2. It functions in the pathway metabolic intermediate metabolism; pimeloyl-CoA biosynthesis; pimeloyl-CoA from pimelate: step 1/1. The protein operates within cofactor biosynthesis; biotin biosynthesis. Its function is as follows. Catalyzes both the decarboxylative condensation of pimeloyl-[acyl-carrier protein] and L-alanine to produce 8-amino-7-oxononanoate (AON), [acyl-carrier protein], and carbon dioxide, and the transformation of pimelate into pimeloyl-CoA with concomitant hydrolysis of ATP to AMP. In Cutibacterium acnes (strain DSM 16379 / KPA171202) (Propionibacterium acnes), this protein is Biotin biosynthesis bifunctional protein BioWF.